A 487-amino-acid polypeptide reads, in one-letter code: Cobyric acid synthase (487 aa).

Residues V248 to S435 enclose the GATase cobBQ-type domain. C329 serves as the catalytic Nucleophile. The active site involves H427.

The protein belongs to the CobB/CobQ family. CobQ subfamily.

The protein operates within cofactor biosynthesis; adenosylcobalamin biosynthesis. Catalyzes amidations at positions B, D, E, and G on adenosylcobyrinic A,C-diamide. NH(2) groups are provided by glutamine, and one molecule of ATP is hydrogenolyzed for each amidation. The protein is Cobyric acid synthase of Pseudomonas entomophila (strain L48).